A 305-amino-acid chain; its full sequence is RxLR effector protein 17 (305 aa).

Residues 1-24 (MQSILWFALIASVVFLVLVDLASG) form the signal peptide. The short motif at 45–60 (RLLRAAHLDRKLSEER) is the RxLR-dEER element. Residues Asn207 and Asn227 are each glycosylated (N-linked (GlcNAc...) asparagine). Residues 247 to 269 (LHLKWAVEAKSPKDVVERILKDL) form a w motif region.

Belongs to the RxLR effector family. Interacts with host A.thaliana At1G14340.

It is found in the secreted. The protein localises to the host cell membrane. In terms of biological role, secreted effector that confers enhanced plant susceptibility during both compatible and incompatible interactions between the pathogen and its host. Promotes the sexual reproduction of the pathogen in the plant host. The chain is RxLR effector protein 17 from Hyaloperonospora arabidopsidis (strain Emoy2) (Downy mildew agent).